Reading from the N-terminus, the 213-residue chain is NADH dehydrogenase [ubiquinone] iron-sulfur protein 7, mitochondrial (213 aa).

A mitochondrion-targeting transit peptide spans 1–38; the sequence is MAVLSAPGLRGFRILGLRSSVGPAVQARGVHQSVATDG. A disordered region spans residues 31–53; that stretch reads HQSVATDGPSSTQPALPKARAVA. The segment covering 33 to 44 has biased composition (polar residues); the sequence is SVATDGPSSTQP. The [4Fe-4S] cluster site is built by Cys88 and Cys89. At Arg111 the chain carries Hydroxyarginine. Residues Cys153 and Cys183 each contribute to the [4Fe-4S] cluster site.

This sequence belongs to the complex I 20 kDa subunit family. Core subunit of respiratory chain NADH dehydrogenase (Complex I) which is composed of 45 different subunits. This is a component of the iron-sulfur (IP) fragment of the enzyme. [4Fe-4S] cluster is required as a cofactor. In terms of processing, hydroxylated at Arg-111 by NDUFAF5 early in the pathway of assembly of complex I, before the formation of the juncture between peripheral and membrane arms.

It localises to the mitochondrion inner membrane. It catalyses the reaction a ubiquinone + NADH + 5 H(+)(in) = a ubiquinol + NAD(+) + 4 H(+)(out). Its function is as follows. Core subunit of the mitochondrial membrane respiratory chain NADH dehydrogenase (Complex I) which catalyzes electron transfer from NADH through the respiratory chain, using ubiquinone as an electron acceptor. Essential for the catalytic activity of complex I. The chain is NADH dehydrogenase [ubiquinone] iron-sulfur protein 7, mitochondrial (NDUFS7) from Homo sapiens (Human).